The chain runs to 495 residues: Cytochrome P450 2E1 (495 aa).

298–303 contributes to the substrate binding site; sequence FAGTET. C437 serves as a coordination point for heme.

This sequence belongs to the cytochrome P450 family. Interacts with chaperones HSP70 and HSP90; this interaction is required for initial targeting to mitochondria. Requires heme as cofactor.

It localises to the endoplasmic reticulum membrane. It is found in the microsome membrane. The protein resides in the mitochondrion inner membrane. The enzyme catalyses an organic molecule + reduced [NADPH--hemoprotein reductase] + O2 = an alcohol + oxidized [NADPH--hemoprotein reductase] + H2O + H(+). It carries out the reaction (5Z,8Z,11Z)-eicosatrienoate + reduced [NADPH--hemoprotein reductase] + O2 = 19-hydroxy-(5Z,8Z,11Z)-eicosatrienoate + oxidized [NADPH--hemoprotein reductase] + H2O + H(+). It catalyses the reaction (5Z,8Z,11Z,14Z,17Z)-eicosapentaenoate + reduced [NADPH--hemoprotein reductase] + O2 = 19-hydroxy-(5Z,8Z,11Z,14Z,17Z)-eicosapentaenoate + oxidized [NADPH--hemoprotein reductase] + H2O + H(+). The catalysed reaction is (4Z,7Z,10Z,13Z,16Z,19Z)-docosahexaenoate + reduced [NADPH--hemoprotein reductase] + O2 = 21-hydroxy-(4Z,7Z,10Z,13Z,16Z,19Z)-docosahexaenoate + oxidized [NADPH--hemoprotein reductase] + H2O + H(+). The enzyme catalyses dodecanoate + reduced [NADPH--hemoprotein reductase] + O2 = 11-hydroxydodecanoate + oxidized [NADPH--hemoprotein reductase] + H2O + H(+). It carries out the reaction tetradecanoate + reduced [NADPH--hemoprotein reductase] + O2 = 13-hydroxytetradecanoate + oxidized [NADPH--hemoprotein reductase] + H2O + H(+). It catalyses the reaction 4-nitrophenol + NADPH + O2 + H(+) = 4-nitrocatechol + NADP(+) + H2O. Its pathway is lipid metabolism; fatty acid metabolism. Its activity is regulated as follows. The omega-1 hydroxylase activity is stimulated by cytochrome b5. Its function is as follows. A cytochrome P450 monooxygenase involved in the metabolism of fatty acids. Mechanistically, uses molecular oxygen inserting one oxygen atom into a substrate, and reducing the second into a water molecule, with two electrons provided by NADPH via cytochrome P450 reductase (NADPH--hemoprotein reductase). Catalyzes the hydroxylation of carbon-hydrogen bonds. Hydroxylates fatty acids specifically at the omega-1 position displaying the highest catalytic activity for saturated fatty acids. May be involved in the oxidative metabolism of xenobiotics. This Bos taurus (Bovine) protein is Cytochrome P450 2E1 (CYP2E1).